A 184-amino-acid polypeptide reads, in one-letter code: Ribosome-recycling factor (184 aa).

This sequence belongs to the RRF family.

Its subcellular location is the cytoplasm. Its function is as follows. Responsible for the release of ribosomes from messenger RNA at the termination of protein biosynthesis. May increase the efficiency of translation by recycling ribosomes from one round of translation to another. This is Ribosome-recycling factor from Mycoplasma pneumoniae (strain ATCC 29342 / M129 / Subtype 1) (Mycoplasmoides pneumoniae).